Reading from the N-terminus, the 166-residue chain is Transmembrane protein 278 (166 aa).

Acidic residues predominate over residues 1–15 (MSDQERETEEDEGGD). The segment at 1–28 (MSDQERETEEDEGGDPSDTAPMLPQRLP) is disordered. 3 helical membrane-spanning segments follow: residues 39 to 59 (GWAS…WALA), 65 to 85 (LLLP…VVYL), and 111 to 131 (AAVI…ASAA).

Belongs to the TMEM88 family.

It localises to the membrane. The polypeptide is Transmembrane protein 278 (TMEM278) (Bos taurus (Bovine)).